A 10061-amino-acid chain; its full sequence is MATH and LRR domain-containing protein PFE0570w (10061 aa).

Disordered stretches follow at residues 166 to 210, 244 to 471, and 1004 to 1170; these read DMDN…EKKN, NNSD…NDIN, and DDQK…DTSF. The span at 169–179 shows a compositional bias: polar residues; it reads NNPNNHVSNNG. The span at 193 to 205 shows a compositional bias: low complexity; that stretch reads TSNSIHKNNNTNI. The segment covering 270–282 has biased composition (basic and acidic residues); sequence KKSDNNNDKKNDD. Residues 285 to 320 are compositionally biased toward low complexity; it reads NNNNNNNNNNNNNNNNNDNHVCTSNNQPNTINKQNN. The span at 328–338 shows a compositional bias: polar residues; the sequence is DQNGRTKITPQ. A coiled-coil region spans residues 338–366; the sequence is QNVNQKEKEIKNVVKEKNNFNREEKDITN. Residues 342–365 show a composition bias toward basic and acidic residues; that stretch reads QKEKEIKNVVKEKNNFNREEKDIT. Residues 366 to 375 show a composition bias toward acidic residues; sequence NSDDYDENST. 2 stretches are compositionally biased toward polar residues: residues 376–389 and 421–437; these read DESCSYNPNITSSE and VPSNDNASSLNVKSAEN. Positions 431–469 form a coiled coil; it reads NVKSAENCNKEKKKKKKKKKKELNNDNKDNTLNNETMND. Residues 441-451 show a composition bias toward basic residues; the sequence is EKKKKKKKKKK. Low complexity predominate over residues 460 to 471; it reads NTLNNETMNDIN. Basic and acidic residues predominate over residues 1025 to 1037; sequence NEEKPNVNKEGNI. Residues 1047–1057 show a composition bias toward low complexity; that stretch reads NKNKNNNNNNN. Residues 1058 to 1132 show a composition bias toward basic and acidic residues; that stretch reads DKNDKNDKND…KKKKNGKEQN (75 aa). Acidic residues predominate over residues 1133 to 1165; sequence EDSTESDDESSVIDDNYIDDDSCDCDSESDSID. The region spanning 1328–1458 is the MATH domain; that stretch reads NGKIELYIPN…SGGLLIKGKV (131 aa). Residues 1651 to 1698 are disordered; sequence GGNLQNEQKGDEDVKKEDVKKENVNKEEIKNGNNNNNNDENENEVDDN. Residues 1658-1680 are compositionally biased toward basic and acidic residues; the sequence is QKGDEDVKKEDVKKENVNKEEIK. Positions 1916-1948 form a coiled coil; sequence NYLSNLNKVKININDLNNNIVDVNNSIHNIEKE. A compositionally biased stretch (basic and acidic residues) spans 1973 to 1995; sequence HKETSSIQNKGKEKSNNNIKSDD. Disordered stretches follow at residues 1973–1998, 2155–2245, 2427–2566, and 3120–3139; these read HKETSSIQNKGKEKSNNNIKSDDNNN, LNKS…PSYK, YSDD…NNIK, and SNETNDTNHTNRTNRTNEMK. A compositionally biased stretch (acidic residues) spans 2216–2228; that stretch reads NNDDKDDDDDDSY. The span at 2235–2245 shows a compositional bias: basic and acidic residues; the sequence is SDGKKNDPSYK. Over residues 2475 to 2484 the composition is skewed to low complexity; the sequence is NNNNNNNNMM. Basic and acidic residues-rich tracts occupy residues 2487–2496 and 2505–2527; these read DDNKVNKNEE and QIKEGKEKKLRDFIQKEDIRNED. Composition is skewed to low complexity over residues 2552-2564 and 3121-3133; these read NNNNNNNNNNNNN and NETNDTNHTNRTN. A coiled-coil region spans residues 2555 to 2580; sequence NNNNNNNNNNIKRLDDSYNKLLKNKN. The chain crosses the membrane as a helical span at residues 3398–3418; it reads KLILKKIFMYLNIICMIIKYI. Disordered stretches follow at residues 3802 to 3826, 3847 to 3890, and 3919 to 3953; these read STNDEENVDRSDDSESNDDKKYSKK, LTSG…DNNN, and ESNDKSYKNQNIQSNEQSVTPNRNIEENKDHEKKS. Residues 3809 to 3822 show a composition bias toward basic and acidic residues; it reads VDRSDDSESNDDKK. Over residues 3851-3890 the composition is skewed to low complexity; that stretch reads NSSSKNSKKNSNNESIQMDNTNNSNSNNNNKNDNNNDNNN. Residues 3926–3941 are compositionally biased toward polar residues; sequence KNQNIQSNEQSVTPNR. Basic and acidic residues predominate over residues 3942–3953; that stretch reads NIEENKDHEKKS. Residues 3977–4001 are a coiled coil; sequence EHLGNATAVLNILQKKLENEELKKL. Over residues 4039 to 4065 the composition is skewed to basic and acidic residues; sequence VSAHKEKNVKTDSSDDKKKKEDNENNN. 6 disordered regions span residues 4039-4074, 4155-4180, 4352-4414, 4919-4943, 4991-5030, and 5179-5207; these read VSAHKEKNVKTDSSDDKKKKEDNENNNKNKNNIIHN, KGNNSKDNNNNNNNNNNNNNNKNNMG, SNNN…NNNN, NKRKQQIDSSNNNNNVVVNNDDNDN, DGLNADSSNLGPYNMNNVKNKNNNNNNSNNKRKKNEKNEK, and SKIASTNGNNNNNNNNNNNNNNNNSKSNL. Residues 4157–4178 show a composition bias toward low complexity; the sequence is NNSKDNNNNNNNNNNNNNNKNN. Residues 4399 to 4424 are a coiled coil; sequence NNNNNNNNNNNNNNNNVNKEIIKLNS. 3 stretches are compositionally biased toward low complexity: residues 4929–4943, 5004–5019, and 5185–5202; these read NNNNNVVVNNDDNDN, NMNNVKNKNNNNNNSN, and NGNNNNNNNNNNNNNNNN. Positions 5006–5046 form a coiled coil; it reads NNVKNKNNNNNNSNNKRKKNEKNEKIDKIEQFLHESELEKD. 3 coiled-coil regions span residues 5486–5563, 5728–5810, and 5900–6022; these read NNNN…NIYE, DVLK…DKEE, and MNND…INNY. 3 stretches are compositionally biased toward basic and acidic residues: residues 5716-5732, 5738-5811, and 5909-5953; these read KDAKKDSKKIPVDVLKD, SNKE…KEEP, and NKNK…KKDN. Disordered regions lie at residues 5716 to 5816, 5892 to 6009, 6123 to 6142, 6299 to 6338, 6722 to 6760, 7585 to 7730, and 7744 to 7787; these read KDAK…QINE, EIIN…KKLK, KSETEASNKNVESNDNVDGK, NDSINMPLPDSPTTTSNSNNNNNNNNSNNNNNNNNYDKGE, NMNNNNNNNNNNNNNNNNNNNNNNNNNNNNNNNNNNNNI, EDML…VEEK, and DLLS…KKSS. A compositionally biased stretch (low complexity) spans 5954–5968; that stretch reads NNSNNNNNNNNLSNN. Over residues 5969–5978 the composition is skewed to acidic residues; sequence GEEDPNDSDS. The span at 5991-6003 shows a compositional bias: basic and acidic residues; sequence NKNINDDSDDNNK. Over residues 6129–6138 the composition is skewed to polar residues; that stretch reads SNKNVESNDN. Composition is skewed to low complexity over residues 6314–6333 and 6722–6759; these read SNSNNNNNNNNSNNNNNNNN and NMNNNNNNNNNNNNNNNNNNNNNNNNNNNNNNNNNNNN. The stretch at 6719 to 6743 forms a coiled coil; sequence NMNNMNNNNNNNNNNNNNNNNNNNN. The span at 7585 to 7599 shows a compositional bias: basic and acidic residues; it reads EDMLHSKKTDVIQHG. The span at 7600 to 7685 shows a compositional bias: acidic residues; the sequence is DEEEDDEEDD…EHINEEEQED (86 aa). Coiled-coil stretches lie at residues 7601–7637, 7710–7813, 7934–7961, and 8217–8241; these read EEEDDEEDDEEDDEEDEEEEEEDEDEEDVEDVEDIED, NTKI…NKNE, KTDEQKIKEEIKQTQDEEDTYLDLIDNE, and NINNKEKETNKNEEQQQGEAEGKRE. Residues 7749–7765 are compositionally biased toward basic residues; that stretch reads SKKKNHKDKRNASKNKN. Positions 7766 to 7786 are enriched in basic and acidic residues; the sequence is KNKDILKKNENNINDEKEKKS. Disordered regions lie at residues 8189–8252, 8293–8380, and 8474–8497; these read ETGG…GGEE, GKVS…IIMS, and KKKNYSNNNIYNNNSSNKVSMDEE. Over residues 8218–8242 the composition is skewed to basic and acidic residues; it reads INNKEKETNKNEEQQQGEAEGKREG. Residues 8243-8252 show a composition bias toward acidic residues; sequence EGEEGEGGEE. Residues 8305-8314 are compositionally biased toward basic and acidic residues; sequence LLNDKEHEKD. Residues 8315–8363 show a composition bias toward acidic residues; it reads NEDNDEDNDEDDDDEDDDEDDEDDDDDDDDDDDDDDDDDYDEDYDEDYD. The segment covering 8364–8374 has biased composition (basic and acidic residues); sequence EKLVENKKNER. Over residues 8478–8492 the composition is skewed to low complexity; it reads YSNNNIYNNNSSNKV. Coiled coils occupy residues 8644–8697, 8882–8907, and 9219–9247; these read SETL…ELNN, QYLEKENTYNNLYKKIKDEKRIVDNY, and IDMKKKIEQEEDKKKIINNNNNNINSNNN. Disordered regions lie at residues 9759–9779, 9891–9926, and 9985–10061; these read TIPRHNTTTTNNNNNDNNNNS, SNTSGNMKNSSNIRSSSNIRSSNNIKSSSNIKSSSN, and KNNS…NNIY. Composition is skewed to low complexity over residues 9764-9779, 9899-9926, and 9986-10022; these read NTTTTNNNNNDNNNNS, NSSNIRSSSNIRSSNNIKSSSNIKSSSN, and NNSITNETHNNNDNMKTNHNNNNNNNNNNNNNNNNNT. Polar residues predominate over residues 10031–10041; the sequence is IFQQNQNHSDT. The segment covering 10042 to 10061 has biased composition (low complexity); sequence NNNNNNNNKNNSNNNNNNIY.

Its subcellular location is the membrane. The polypeptide is MATH and LRR domain-containing protein PFE0570w (Plasmodium falciparum (isolate 3D7)).